Here is a 1189-residue protein sequence, read N- to C-terminus: Phosphinothricin tripeptide synthetase PhsB (1189 aa).

Positions 5-80 (QTDDVVTGRI…ALAKRIRASR (76 aa)) constitute a Carrier 1 domain. S40 carries the O-(pantetheine 4'-phosphoryl)serine modification. Disordered regions lie at residues 75-97 (RIRA…PVDS) and 454-476 (TPDR…GGDT). The tract at residues 100–541 (TAPLTFQQEP…VALLPLQEPA (442 aa)) is condensation. Basic and acidic residues predominate over residues 455–472 (PDRDGREPGEGPFAREES). Residues 572-969 (AQAHRTPDAV…GREDGQVKLR (398 aa)) form an adenylation region. A disordered region spans residues 1045–1081 (DRVPLTPSGKTDRKALPDPAAGEQPRSGRGAAPGTPA). The Carrier 2 domain occupies 1076-1151 (APGTPAEREL…DFALAVVTAQ (76 aa)). S1111 is modified (O-(pantetheine 4'-phosphoryl)serine).

The protein belongs to the NRP synthetase family. Requires pantetheine 4'-phosphate as cofactor.

It catalyses the reaction holo-[peptidyl-carrier protein] + L-alanine + ATP = L-alanyl-[peptidyl-carrier protein] + AMP + diphosphate. It participates in secondary metabolite biosynthesis; bialaphos biosynthesis. Involved in the biosynthesis of phosphinothricin tripeptide (PTT), also known as bialaphos (BA), a natural-product antibiotic and potent herbicide. Adenylates L-alanine and loads it onto a peptidyl carrier domain via a thioester linkage to the phosphopanthetheine moiety. Shows weaker activity with aminobutyric acid and L-serine. This chain is Phosphinothricin tripeptide synthetase PhsB, found in Streptomyces viridochromogenes (strain DSM 40736 / JCM 4977 / BCRC 1201 / Tue 494).